A 141-amino-acid chain; its full sequence is Large ribosomal subunit protein uL16 (141 aa).

The tract at residues 1-23 is disordered; the sequence is MLMPKRTKWRKQQKGRNRGKSFR.

This sequence belongs to the universal ribosomal protein uL16 family. Part of the 50S ribosomal subunit.

Binds 23S rRNA and is also seen to make contacts with the A and possibly P site tRNAs. The polypeptide is Large ribosomal subunit protein uL16 (Sulfurovum sp. (strain NBC37-1)).